A 521-amino-acid polypeptide reads, in one-letter code: Exoglucanase 1 (521 aa).

An N-terminal signal peptide occupies residues 1–17; sequence MLAKFAALAALVASANA. The tract at residues 18 to 450 is catalytic; that stretch reads QAVCSLTAET…FGPIGSTFSG (433 aa). Residue Asn-32 is glycosylated (N-linked (GlcNAc...) asparagine). Residue Glu-229 is the Nucleophile of the active site. The active-site Proton donor is Glu-234. Asn-287 carries an N-linked (GlcNAc...) asparagine glycan. A disordered region spans residues 447–486; it reads TFSGGSSGTPPSNPSSSVKPVTSTAKPSSTSTASNPSGTG. Positions 451 to 485 are linker; sequence GSSGTPPSNPSSSVKPVTSTAKPSSTSTASNPSGT. In terms of domain architecture, CBM1 spans 485–521; sequence TGAAHWAQCGGIGFSGPTTCQSPYTCQKINDYYSQCV. Disulfide bonds link Cys-493–Cys-510 and Cys-504–Cys-520.

This sequence belongs to the glycosyl hydrolase 7 (cellulase C) family.

It localises to the secreted. It catalyses the reaction Hydrolysis of (1-&gt;4)-beta-D-glucosidic linkages in cellulose and cellotetraose, releasing cellobiose from the non-reducing ends of the chains.. This chain is Exoglucanase 1 (cbh-1), found in Neurospora crassa (strain ATCC 24698 / 74-OR23-1A / CBS 708.71 / DSM 1257 / FGSC 987).